A 141-amino-acid chain; its full sequence is uncharacterized protein (141 aa).

This is an uncharacterized protein from Caenorhabditis elegans.